Here is a 725-residue protein sequence, read N- to C-terminus: Catalase B (725 aa).

The first 15 residues, Met1 to Ala15, serve as a signal peptide directing secretion. The propeptide occupies Ala16 to Arg27. Asn50 is a glycosylation site (N-linked (GlcNAc...) asparagine). His101 is a catalytic residue. A glycan (N-linked (GlcNAc...) asparagine) is linked at Asn119. The active site involves Asn174. Tyr388 provides a ligand contact to heme. N-linked (GlcNAc...) asparagine glycosylation is found at Asn447, Asn550, and Asn645.

Belongs to the catalase family. In terms of assembly, homotetramer. Requires heme as cofactor.

Its subcellular location is the secreted. The catalysed reaction is 2 H2O2 = O2 + 2 H2O. Occurs in almost all aerobically respiring organisms and serves to protect cells from the toxic effects of hydrogen peroxide through its degradation into water and oxygen. In Aspergillus oryzae (strain ATCC 42149 / RIB 40) (Yellow koji mold), this protein is Catalase B (catB).